The following is a 100-amino-acid chain: Aspartyl/glutamyl-tRNA(Asn/Gln) amidotransferase subunit C (100 aa).

Belongs to the GatC family. In terms of assembly, heterotrimer of A, B and C subunits.

The enzyme catalyses L-glutamyl-tRNA(Gln) + L-glutamine + ATP + H2O = L-glutaminyl-tRNA(Gln) + L-glutamate + ADP + phosphate + H(+). It catalyses the reaction L-aspartyl-tRNA(Asn) + L-glutamine + ATP + H2O = L-asparaginyl-tRNA(Asn) + L-glutamate + ADP + phosphate + 2 H(+). In terms of biological role, allows the formation of correctly charged Asn-tRNA(Asn) or Gln-tRNA(Gln) through the transamidation of misacylated Asp-tRNA(Asn) or Glu-tRNA(Gln) in organisms which lack either or both of asparaginyl-tRNA or glutaminyl-tRNA synthetases. The reaction takes place in the presence of glutamine and ATP through an activated phospho-Asp-tRNA(Asn) or phospho-Glu-tRNA(Gln). This is Aspartyl/glutamyl-tRNA(Asn/Gln) amidotransferase subunit C from Rickettsia typhi (strain ATCC VR-144 / Wilmington).